The primary structure comprises 458 residues: Tol-Pal system protein TolB (458 aa).

An N-terminal signal peptide occupies residues 1-23 (MSSVIRKWALTALMAVSSTALFA).

The protein belongs to the TolB family. The Tol-Pal system is composed of five core proteins: the inner membrane proteins TolA, TolQ and TolR, the periplasmic protein TolB and the outer membrane protein Pal. They form a network linking the inner and outer membranes and the peptidoglycan layer.

The protein localises to the periplasm. Functionally, part of the Tol-Pal system, which plays a role in outer membrane invagination during cell division and is important for maintaining outer membrane integrity. In Zymomonas mobilis subsp. mobilis (strain ATCC 31821 / ZM4 / CP4), this protein is Tol-Pal system protein TolB.